A 137-amino-acid chain; its full sequence is Large ribosomal subunit protein uL16 (137 aa).

Belongs to the universal ribosomal protein uL16 family. Part of the 50S ribosomal subunit.

Binds 23S rRNA and is also seen to make contacts with the A and possibly P site tRNAs. In Stutzerimonas stutzeri (strain A1501) (Pseudomonas stutzeri), this protein is Large ribosomal subunit protein uL16.